The sequence spans 279 residues: Biotin synthase (279 aa).

In terms of domain architecture, Radical SAM core spans valine 2–arginine 232. 3 residues coordinate [4Fe-4S] cluster: cysteine 20, cysteine 24, and cysteine 27. [2Fe-2S] cluster-binding residues include cysteine 96, cysteine 156, and lysine 227.

It belongs to the radical SAM superfamily. Biotin synthase family. As to quaternary structure, homodimer. It depends on [4Fe-4S] cluster as a cofactor. [2Fe-2S] cluster serves as cofactor.

It carries out the reaction (4R,5S)-dethiobiotin + (sulfur carrier)-SH + 2 reduced [2Fe-2S]-[ferredoxin] + 2 S-adenosyl-L-methionine = (sulfur carrier)-H + biotin + 2 5'-deoxyadenosine + 2 L-methionine + 2 oxidized [2Fe-2S]-[ferredoxin]. The protein operates within cofactor biosynthesis; biotin biosynthesis; biotin from 7,8-diaminononanoate: step 2/2. In terms of biological role, catalyzes the conversion of dethiobiotin (DTB) to biotin by the insertion of a sulfur atom into dethiobiotin via a radical-based mechanism. The protein is Biotin synthase of Thermotoga neapolitana (strain ATCC 49049 / DSM 4359 / NBRC 107923 / NS-E).